Consider the following 207-residue polypeptide: MLEHFLSYLTQEHLTELFQSYRAFGPLIAVLLPLIEAFLPFLPLIVFVVANTNSFGLWEGFILSWAGSTAGSILVFLIVRQYGQRKLLGFIRSHPSVRKLMLWVERHGFGPMFLLLCFPFTPSAAVNVVAGLSRIGTRPFILAAASGKLVMIFMISFIGYDLHALITQPIRTVIAVLVITVLWYVGKKVERYLHVRASQREHDGGRQ.

5 helical membrane-spanning segments follow: residues I28–V48, E59–V79, M112–L132, F140–Y160, and L165–V185.

The protein localises to the cell membrane. This is an uncharacterized protein from Bacillus subtilis (strain 168).